Reading from the N-terminus, the 567-residue chain is Vacuolar fusion protein MON1 homolog (567 aa).

Disordered regions lie at residues 1 to 52 (MDMD…DDEG) and 65 to 129 (TSAS…DDTS). Residues 7-19 (TNNPSPPGPPDSP) show a composition bias toward pro residues. The span at 43–52 (DDYDDDDDEG) shows a compositional bias: acidic residues.

Belongs to the MON1/SAND family. Interacts with CCZ1A, CCZ1B and RABF2B.

The protein resides in the endosome. It localises to the prevacuolar compartment. Plays an important role in membrane trafficking through the secretory apparatus. In complex with CCZ1, acts as a guanine exchange factor (GEF) for Rab7 protein family. Promotes the exchange of GDP to GTP, converting it from an inactive GDP-bound form into an active GTP-bound form. The active form is involved in protein trafficking from prevacuolar compartments (PVCs) to vacuoles. May serve as a linker between Rab5 and Rab7 protein families in PVCs and mediate PVC maturation. The polypeptide is Vacuolar fusion protein MON1 homolog (Oryza sativa subsp. japonica (Rice)).